A 335-amino-acid chain; its full sequence is Glucokinase (335 aa).

A11–T16 contributes to the ATP binding site.

It belongs to the bacterial glucokinase family.

Its subcellular location is the cytoplasm. It carries out the reaction D-glucose + ATP = D-glucose 6-phosphate + ADP + H(+). This chain is Glucokinase, found in Stenotrophomonas maltophilia (strain R551-3).